A 467-amino-acid polypeptide reads, in one-letter code: Nuclear distribution protein PAC1 (467 aa).

The stretch at 62–96 (GSIIRLQRAITKLEQKCDALQQELDDKTKQLETIV) forms a coiled coil. WD repeat units lie at residues 121 to 160 (QNES…IPLA), 164 to 212 (AHSK…GELK), 219 to 262 (AHDS…QSFS), 264 to 302 (HSEW…SVGT), 325 to 365 (PYRD…LKPN), 385 to 424 (GHTS…KTWS), and 426 to 466 (IHNN…VKII).

This sequence belongs to the WD repeat LIS1/nudF family. Self-associates. Interacts with NDL1 and dynein.

It is found in the cytoplasm. Its subcellular location is the cytoskeleton. It localises to the spindle pole. Functionally, positively regulates the activity of the minus-end directed microtubule motor protein dynein. Plays a central role in positioning the mitotic spindle at the bud neck during cell division. Targets cytoplasmic dynein to microtubule plus ends, thereby promoting dynein-mediated microtubule sliding along the bud cortex and consequently the movement of the mitotic spindle to the bud neck. The chain is Nuclear distribution protein PAC1 from Candida glabrata (strain ATCC 2001 / BCRC 20586 / JCM 3761 / NBRC 0622 / NRRL Y-65 / CBS 138) (Yeast).